Here is a 352-residue protein sequence, read N- to C-terminus: MALPFRKDLGDYKDLDEDELLGKLSESELKQLETVLDDLDPENALLPAGFRQKNQTSKSATGPFDRERLLSYLEKQALEHKDRDDYVPYTGEKKGKIFIPKQKPAQTLTEETISLDPELEEALTSASDTELCDLAAILGMHNLIADTPFCDVLGSSNGVNQERFPNVVKGEKILPVFDEPPNPTNVEESLKRIRENDARLVEVNLNNIKNIPIPTLKDFAKTLEANTHVKHFSLAATRSNDPVAVAFADMLKVNKTLKSLNMESNFITGAGVLALIDALRDNETLMELKIDNQRQQLGTSVELEMAKMLEENTNILKFGYQFTQQGPRTRAANAITKNNDLVRKRRIEGDHQ.

A Phosphoserine modification is found at Ser25.

It belongs to the tropomodulin family. As to quaternary structure, binds to the N-terminus of tropomyosin and to actin. Interacts with FLII. Ubiquitous.

The protein resides in the cytoplasm. It is found in the cytoskeleton. Functionally, blocks the elongation and depolymerization of the actin filaments at the pointed end. The Tmod/TM complex contributes to the formation of the short actin protofilament, which in turn defines the geometry of the membrane skeleton. The chain is Tropomodulin-3 (Tmod3) from Mus musculus (Mouse).